Consider the following 505-residue polypeptide: Glucose-6-phosphate 1-dehydrogenase (505 aa).

Ser-2 carries the post-translational modification N-acetylserine. NADP(+) contacts are provided by residues 18-25 and Arg-52; that span reads GASGDLAK. Ser-142 bears the Phosphoserine mark. Tyr-145 bears the Phosphotyrosine mark. Residue Lys-157 coordinates NADP(+). D-glucose 6-phosphate-binding positions include Lys-157, 187-191, Glu-225, and Asp-244; that span reads HYLGK. His-249 functions as the Proton acceptor in the catalytic mechanism. Arg-340 is a binding site for NADP(+). Lys-343 is a binding site for D-glucose 6-phosphate. Positions 349, 353, and 375 each coordinate NADP(+). Gln-377 lines the D-glucose 6-phosphate pocket. Residues 383–385 and Arg-470 each bind NADP(+); that span reads YLK.

This sequence belongs to the glucose-6-phosphate dehydrogenase family.

The enzyme catalyses D-glucose 6-phosphate + NADP(+) = 6-phospho-D-glucono-1,5-lactone + NADPH + H(+). It functions in the pathway carbohydrate degradation; pentose phosphate pathway; D-ribulose 5-phosphate from D-glucose 6-phosphate (oxidative stage): step 1/3. Functionally, catalyzes the rate-limiting step of the oxidative pentose-phosphate pathway, which represents a route for the dissimilation of carbohydrates besides glycolysis. The main function of this enzyme is to provide reducing power (NADPH) and pentose phosphates for fatty acid and nucleic acid synthesis. This is Glucose-6-phosphate 1-dehydrogenase (ZWF1) from Saccharomyces cerevisiae (strain ATCC 204508 / S288c) (Baker's yeast).